Here is a 136-residue protein sequence, read N- to C-terminus: Probable intron-encoded DNA endonuclease 3 (136 aa).

It belongs to the LAGLIDADG endonuclease family.

It is found in the mitochondrion. In terms of biological role, mitochondrial DNA endonuclease involved in intron homing. In Mycosarcoma maydis (Corn smut fungus), this protein is Probable intron-encoded DNA endonuclease 3 (hegI3).